We begin with the raw amino-acid sequence, 191 residues long: Fe/S biogenesis protein NfuA (191 aa).

Residues cysteine 149 and cysteine 152 each coordinate [4Fe-4S] cluster.

It belongs to the NfuA family. In terms of assembly, homodimer. [4Fe-4S] cluster serves as cofactor.

In terms of biological role, involved in iron-sulfur cluster biogenesis. Binds a 4Fe-4S cluster, can transfer this cluster to apoproteins, and thereby intervenes in the maturation of Fe/S proteins. Could also act as a scaffold/chaperone for damaged Fe/S proteins. This chain is Fe/S biogenesis protein NfuA, found in Salmonella typhi.